The primary structure comprises 198 residues: TM2 domain-containing protein 2 (198 aa).

Positions 1 to 27 are cleaved as a signal peptide; sequence MRWPVPPLGYLLLGGQGLLLTFSLISS. At 28-128 the chain is on the extracellular side; it reads QNNTSPVTYP…FLRGNRPCIK (101 aa). Residues asparagine 29, asparagine 40, and asparagine 76 are each glycosylated (N-linked (GlcNAc...) asparagine). A helical membrane pass occupies residues 129–149; the sequence is YTGHYFITTLLYSFFLGCFGV. The TM2 domain maps to 131–179; that stretch reads GHYFITTLLYSFFLGCFGVDRFCLGHTGTAVGKLLTWGGLGIWWFVDLI. Residues 150 to 166 lie on the Cytoplasmic side of the membrane; the sequence is DRFCLGHTGTAVGKLLT. The helical transmembrane segment at 167–187 threads the bilayer; the sequence is WGGLGIWWFVDLILLITGGLM. Over 188-198 the chain is Extracellular; that stretch reads PSDNSNWCTIY.

This sequence belongs to the TM2 family.

It is found in the membrane. The chain is TM2 domain-containing protein 2 (tm2d2) from Xenopus laevis (African clawed frog).